The primary structure comprises 247 residues: Protein IRON-RELATED TRANSCRIPTION FACTOR 2 (247 aa).

A Nuclear localization signal motif is present at residues 68 to 75 (HRKLSHNA). The interval 68 to 81 (HRKLSHNAYERDRR) is basic motif. Residues 68-119 (HRKLSHNAYERDRRKQLNELYSSLRALLPDADHTKLSIPTTVSRVLKYIPEL) enclose the bHLH domain. Residues 82–119 (KQLNELYSSLRALLPDADHTKLSIPTTVSRVLKYIPEL) are helix-loop-helix motif.

The protein belongs to the bHLH protein family. As to quaternary structure, forms homodimers. Interacts with BHLH156 in the nucleus. Expressed constitutively at low levels in the roots. Also observed in flowers, developing seeds, embryos and vascular bundles.

It is found in the nucleus. The protein resides in the cytoplasm. Its function is as follows. Transcription activator that binds to the DNA motif 5'-CACGTGG-3' in the promoter of iron (Fe) deficiency-inducible genes as well as of genes involved in iron homeostasis, thus contributing to basal tolerance to iron deficiency, iron uptake from soil and iron transport, particularly during seed maturation and germination. Promotes the accumulation of mugineic acid family phytosiderophores (MAs). Required for ethylene-mediated signaling during iron deficiency responses. Improves growth and yield, especially in calcareous soil with low iron availability. Promotes iron concentration in shoots and grain. In Oryza sativa subsp. japonica (Rice), this protein is Protein IRON-RELATED TRANSCRIPTION FACTOR 2.